The primary structure comprises 56 residues: Small ribosomal subunit protein uS14 (56 aa).

Zn(2+)-binding residues include Cys21, Cys24, Cys39, and Cys42.

This sequence belongs to the universal ribosomal protein uS14 family. In terms of assembly, component of the 40S small ribosomal subunit. Zn(2+) serves as cofactor.

It localises to the cytoplasm. It is found in the cytosol. The protein localises to the rough endoplasmic reticulum. The protein is Small ribosomal subunit protein uS14 (RpS29) of Lonomia obliqua (Moth).